We begin with the raw amino-acid sequence, 629 residues long: MEHITTPKVENVKLLDRYTNRKAASGTLYLTATHLIYVDASAEVRKETWILHHHIATVEKLPLTTAGCPLLIHCKNFHVAHFVIGQERDCHEVYTSLLKLSQPVKPEELYAFSYNPKMSKDNREIGWKLIDLKVDYQRMGIPNDYWEITDLNKDYEVCNTYPPEIVVPRAASKATVIGSSRFRSRGRIPVLSYLYKENNAAICRCSQPLSGFSARCLEDEQMLQAIREANPGSPFMYVVDTRPKLNAMANRAAGKGYENEDNYDNIRFKFIGIENIHVMRSSLQKLLEVCETKSPSMSDFLTGLENSGWLRHIKAVMDASVFLAKAVKDEKASVLVHCSDGWDRTAQVCSLASLLLDPFYRAFKGFMVLIEKEWIAMGHKFSHRCGHLDGDPKEVSPVFTQFIECVWQLMQQFPCTFEFNEHFLLEIHDHVYSCQFGNFLGTCHKEREDLKIFEKTHSLWPFLLQKKQELRNPLYRGFTAYKELQPNTLPFSFQFWCGMYNRFDKGMHPKQCVLDHLLSCMNQKIKLEDNASELENKLPFLDGPLPNEACFLSKVGCAASKTPMLNTPQDYEGEAPPVLTNGISVGDINVTSDVDQRNKENLANHRDLHLNDSVDVLNSEAKDGKPQHH.

The region spanning glycine 126–tyrosine 500 is the Myotubularin phosphatase domain. Positions 250, 275, and 276 each coordinate a 1,2-diacyl-sn-glycero-3-phospho-(1D-myo-inositol-3,5-bisphosphate). A 1,2-diacyl-sn-glycero-3-phospho-(1D-myo-inositol-3-phosphate)-binding residues include asparagine 250, asparagine 275, and isoleucine 276. The active-site Phosphocysteine intermediate is the cysteine 338. A 1,2-diacyl-sn-glycero-3-phospho-(1D-myo-inositol-3,5-bisphosphate)-binding residues include serine 339, aspartate 340, glycine 341, tryptophan 342, aspartate 343, arginine 344, lysine 380, and arginine 384. Residues serine 339, aspartate 340, glycine 341, tryptophan 342, aspartate 343, and arginine 344 each contribute to the a 1,2-diacyl-sn-glycero-3-phospho-(1D-myo-inositol-3-phosphate) site. Residues serine 339 and aspartate 340 each coordinate phosphate. Phosphate-binding residues include tryptophan 342, aspartate 343, and arginine 344. Arginine 384 contributes to the a 1,2-diacyl-sn-glycero-3-phospho-(1D-myo-inositol-3-phosphate) binding site. Positions leucine 517–glycine 543 form a coiled coil.

The protein belongs to the protein-tyrosine phosphatase family. Non-receptor class myotubularin subfamily. As to quaternary structure, homodimer.

It localises to the nucleus envelope. The catalysed reaction is a 1,2-diacyl-sn-glycero-3-phospho-(1D-myo-inositol-3,5-bisphosphate) + H2O = a 1,2-diacyl-sn-glycero-3-phospho-(1D-myo-inositol-5-phosphate) + phosphate. It catalyses the reaction a 1,2-diacyl-sn-glycero-3-phospho-(1D-myo-inositol-3-phosphate) + H2O = a 1,2-diacyl-sn-glycero-3-phospho-(1D-myo-inositol) + phosphate. The enzyme catalyses 1,2-dioctanoyl-sn-glycero-3-phospho-(1D-myo-inositol-3,5-bisphosphate) + H2O = 1,2-dioctanoyl-sn-glycero-3-phospho-(1D-myo-inositol-5-phosphate) + phosphate. In terms of biological role, lipid phosphatase that specifically dephosphorylates the D-3 position of phosphatidylinositol 3-phosphate and phosphatidylinositol 3,5-bisphosphate, generating phosphatidylinositol and phosphatidylinositol 5-phosphate. In Gallus gallus (Chicken), this protein is Phosphatidylinositol-3,5-bisphosphate 3-phosphatase MTMR8.